The chain runs to 267 residues: Transcription factor LBX1 (267 aa).

Over residues 1–21 (MTSKDEAKSSASSVEERRRNA) the composition is skewed to basic and acidic residues. The tract at residues 1-36 (MTSKDEAKSSASSVEERRRNALDLLPPPANSNKPLT) is disordered. The segment at residues 127–186 (RRKSRTAFTNHQIYELEKRFLYQKYLSPADRDQIAQQLGLTNAQVITWFQNRRAKLKRDL) is a DNA-binding region (homeobox). Residues 211–267 (SELEESGSERGNSRSRSPQLGLTSNHMPLSPSXPLTDQHASKECSEDEEDVEIDVDD) are disordered. Over residues 228–237 (PQLGLTSNHM) the composition is skewed to polar residues. The segment covering 255-267 (SEDEEDVEIDVDD) has biased composition (acidic residues).

Expressed in all myoblasts that will populate body wall muscles as well as in a group of cells the migrate into the head.

It is found in the nucleus. Its function is as follows. Transcription factor that controls hypaxial muscle development by down-regulating myod1 and cdkn1b/p27, thereby allowing myoblasts to proliferate before the onset of terminal differentiation. The sequence is that of Transcription factor LBX1 from Xenopus laevis (African clawed frog).